The primary structure comprises 123 residues: SOSS complex subunit C homolog (123 aa).

Belongs to the SOSS-C family.

The sequence is that of SOSS complex subunit C homolog from Drosophila ananassae (Fruit fly).